We begin with the raw amino-acid sequence, 230 residues long: 5'-methylthioadenosine/S-adenosylhomocysteine nucleosidase (230 aa).

The Proton acceptor role is filled by Glu-12. Substrate contacts are provided by residues Gly-78, Ile-153, and 174–175 (ME). Asp-198 (proton donor) is an active-site residue.

Belongs to the PNP/UDP phosphorylase family. MtnN subfamily.

It carries out the reaction S-adenosyl-L-homocysteine + H2O = S-(5-deoxy-D-ribos-5-yl)-L-homocysteine + adenine. The enzyme catalyses S-methyl-5'-thioadenosine + H2O = 5-(methylsulfanyl)-D-ribose + adenine. The catalysed reaction is 5'-deoxyadenosine + H2O = 5-deoxy-D-ribose + adenine. Its pathway is amino-acid biosynthesis; L-methionine biosynthesis via salvage pathway; S-methyl-5-thio-alpha-D-ribose 1-phosphate from S-methyl-5'-thioadenosine (hydrolase route): step 1/2. Functionally, catalyzes the irreversible cleavage of the glycosidic bond in both 5'-methylthioadenosine (MTA) and S-adenosylhomocysteine (SAH/AdoHcy) to adenine and the corresponding thioribose, 5'-methylthioribose and S-ribosylhomocysteine, respectively. Also cleaves 5'-deoxyadenosine, a toxic by-product of radical S-adenosylmethionine (SAM) enzymes, into 5-deoxyribose and adenine. The chain is 5'-methylthioadenosine/S-adenosylhomocysteine nucleosidase from Shewanella loihica (strain ATCC BAA-1088 / PV-4).